The sequence spans 159 residues: Nucleotide-binding protein Psyr_4087 (159 aa).

The protein belongs to the YajQ family.

Nucleotide-binding protein. The polypeptide is Nucleotide-binding protein Psyr_4087 (Pseudomonas syringae pv. syringae (strain B728a)).